A 117-amino-acid chain; its full sequence is Glycine cleavage system H-like protein (117 aa).

The 83-residue stretch at 21 to 103 folds into the Lipoyl-binding domain; it reads IVRLGLSSRM…ESEGWFVVLQ (83 aa). Lys-62 carries the N6-lipoyllysine modification.

The protein belongs to the GcvH family. Requires (R)-lipoate as cofactor.

This Chlamydia muridarum (strain MoPn / Nigg) protein is Glycine cleavage system H-like protein.